Here is a 473-residue protein sequence, read N- to C-terminus: Photosystem II CP43 reaction center protein (473 aa).

The propeptide occupies 1–14 (MKTLYSLRRFYHVE). N-acetylthreonine is present on Thr15. At Thr15 the chain carries Phosphothreonine. 5 helical membrane passes run 69-93 (LFEV…PHLA), 134-155 (LLGP…KDRN), 178-200 (KALY…RKIT), 255-275 (KPFA…LSYS), and 291-312 (WFNN…ASQA). Glu367 contributes to the [CaMn4O5] cluster binding site. The helical transmembrane segment at 447-471 (RARAAAAGFEKGIDRDFEPVLSMTP) threads the bilayer.

Belongs to the PsbB/PsbC family. PsbC subfamily. PSII is composed of 1 copy each of membrane proteins PsbA, PsbB, PsbC, PsbD, PsbE, PsbF, PsbH, PsbI, PsbJ, PsbK, PsbL, PsbM, PsbT, PsbX, PsbY, PsbZ, Psb30/Ycf12, at least 3 peripheral proteins of the oxygen-evolving complex and a large number of cofactors. It forms dimeric complexes. Requires Binds multiple chlorophylls and provides some of the ligands for the Ca-4Mn-5O cluster of the oxygen-evolving complex. It may also provide a ligand for a Cl- that is required for oxygen evolution. PSII binds additional chlorophylls, carotenoids and specific lipids. as cofactor.

Its subcellular location is the plastid. It localises to the chloroplast thylakoid membrane. In terms of biological role, one of the components of the core complex of photosystem II (PSII). It binds chlorophyll and helps catalyze the primary light-induced photochemical processes of PSII. PSII is a light-driven water:plastoquinone oxidoreductase, using light energy to abstract electrons from H(2)O, generating O(2) and a proton gradient subsequently used for ATP formation. The sequence is that of Photosystem II CP43 reaction center protein from Chloranthus spicatus (Chulantree).